We begin with the raw amino-acid sequence, 432 residues long: Putative D-alanyl-D-alanine carboxypeptidase (432 aa).

A helical; Signal-anchor membrane pass occupies residues 7-25; the sequence is ATVLLTFSLSAFAVEYPVL.

Belongs to the peptidase S12 family. YfeW subfamily.

The protein resides in the cell inner membrane. The catalysed reaction is Preferential cleavage: (Ac)2-L-Lys-D-Ala-|-D-Ala. Also transpeptidation of peptidyl-alanyl moieties that are N-acyl substituents of D-alanine.. In Salmonella typhimurium (strain LT2 / SGSC1412 / ATCC 700720), this protein is Putative D-alanyl-D-alanine carboxypeptidase.